The following is a 298-amino-acid chain: Inosose dehydratase (298 aa).

This sequence belongs to the IolE/MocC family. The cofactor is glutathione. Co(2+) is required as a cofactor. It depends on Mn(2+) as a cofactor.

It catalyses the reaction scyllo-inosose = 3D-3,5/4-trihydroxycyclohexane-1,2-dione + H2O. The protein operates within polyol metabolism; myo-inositol degradation into acetyl-CoA; acetyl-CoA from myo-inositol: step 2/7. In terms of biological role, catalyzes the dehydration of inosose (2-keto-myo-inositol, 2KMI or 2,4,6/3,5-pentahydroxycyclohexanone) to 3D-(3,5/4)-trihydroxycyclohexane-1,2-dione (D-2,3-diketo-4-deoxy-epi-inositol). In Bacillus anthracis (strain CDC 684 / NRRL 3495), this protein is Inosose dehydratase.